A 214-amino-acid chain; its full sequence is Rho-related GTP-binding protein RhoJ (214 aa).

2 S-palmitoyl cysteine lipidation sites follow: cysteine 3 and cysteine 11. GTP-binding positions include 31–36 (AVGKTC), 46–53 (FPEEYVPT), 75–79 (DTAGQ), 133–136 (TQID), and 177–178 (AL). The Effector region signature appears at 50–58 (YVPTVFDHY). Cysteine 211 bears the Cysteine methyl ester mark. Cysteine 211 is lipidated: S-farnesyl cysteine. A propeptide spans 212-214 (AII) (removed in mature form).

It belongs to the small GTPase superfamily. Rho family. Interacts with the CRIB domains of proteins such as Pak1 and Was/Wasp. Interacts with GLUL. Post-translationally, palmitoylated; regulates localization to the plasma membrane and may be mediated by GLUL. Highly expressed in heart with moderate levels in lung and liver. Very low levels detected in brain, spleen, skeletal muscle, kidney and testis.

It is found in the cell membrane. Functionally, plasma membrane-associated small GTPase specifically involved in angiogenesis. Required for endothelial cell migration during vascular development via its interaction with GLUL. Elicits the formation of F-actin-rich structures, thereby regulating endothelial cell migration. This chain is Rho-related GTP-binding protein RhoJ (Rhoj), found in Mus musculus (Mouse).